Here is a 217-residue protein sequence, read N- to C-terminus: MKFFVDTADIDAIRELHELGMVDGVTTNPSLIMKSGRDIKEVTAEICALVDGPVSAETVALDADGMINEGRELAKIADNITIKVPLTWAGLQACKVLSGEGRMVNVTLCFSANQALLAAKAGATFISPFVGRLDDLNMDGMDLIAEIRQIYDNYGFETEILVASIRSANHMKDAALIGADVATAPPGVIKAMANHVMTDKGLDAFMADWAKTGQSIV.

The active-site Schiff-base intermediate with substrate is K83.

The protein belongs to the transaldolase family. Type 3B subfamily.

The protein resides in the cytoplasm. The enzyme catalyses D-sedoheptulose 7-phosphate + D-glyceraldehyde 3-phosphate = D-erythrose 4-phosphate + beta-D-fructose 6-phosphate. It functions in the pathway carbohydrate degradation; pentose phosphate pathway; D-glyceraldehyde 3-phosphate and beta-D-fructose 6-phosphate from D-ribose 5-phosphate and D-xylulose 5-phosphate (non-oxidative stage): step 2/3. Transaldolase is important for the balance of metabolites in the pentose-phosphate pathway. This chain is Probable transaldolase, found in Jannaschia sp. (strain CCS1).